The following is a 983-amino-acid chain: MRRPRRPGGPAGCGGSEGSGGLRLLVCLLLLSGRPGGCSAISAHGCLFDRRLCSHLEVCIQDGLFGQCQAGVGQARPLLQVTSPVLQRLQGVLRQLMSQGLSWHDDLTQYVISQEMERIPRLRPPEPHPRDRSGSVPRRAGPAGELLSQGNPTGSSPAVQGLSRPPGDGNGAGVGSPLSSLQAELLPPLLEHLLMPPQPPHPSLTYEPALLQPYLFQQFGSRDGSRGSESASGVVGHLAKAEDPVLFSRSLSKAILGTHSGHSFGDLTGPSPAQLFQDSGLLYMAQELPVPGRARAPRLPEEGGSSRAEDSSEGHEEEVLGGHGEKSPPQAVQADVSLQRLAAVLAGYGVELRQLTPEQLSTLLTLLQLLPKGTGRHLGGAVNGGADVKKTIEEQMQRGDTADARPPTPLLPGHPTASSTSIKVRQVLSPGFPEPPKTSSPLGISAVLLEKKSPLGQSQPTVVGQPSARPSAEEYGYIVTDQKPLSLVAGVKLLEILAEHVHMTSGSFINISVVGPAVTFRIRHNEQNLSLADVTQQAGLVKSELEAQTGLQILQTGVGQREESAAVLPRQAHGISPMRSLLLTLVALAGVAGLLVALAVALCMRHHSKQRDKERLAALGPEGAHGDTTFEYQDLCRQHMATKSLFNRAEGQPEPSRVSSVSSQFSDAAQASPSSHSSTPSWCEEPAQANMDISTGHMILAYMEDHLRNRDRLAKEWQALCAYQAEPNTCATAQGEGNIKKNRHPDFLPYDHARIKLKVESSPSRSDYINASPIIEHDPRMPAYIATQGPLSHTIADFWQMVWESGCTVIVMLTPLVEDGVKQCDRYWPDEGSSLYHVYEVNLVSEHIWCEDFLVRSFYLKNVQTQETRTLTQFHFLSWPAEGTPASTRPLLDFRRKVNKCYRGRSCPIIVHCSDGAGRTGTYILIDMVLNRMAKGVKEIDIAATLEHVRDQRPGLVRSKDQFEFALTAVAEEVNAILKALPQ.

A signal peptide spans 1 to 40 (MRRPRRPGGPAGCGGSEGSGGLRLLVCLLLLSGRPGGCSA). An RESP18 homology domain region spans residues 41 to 137 (ISAHGCLFDR…HPRDRSGSVP (97 aa)). The Lumenal portion of the chain corresponds to 41-579 (ISAHGCLFDR…RQAHGISPMR (539 aa)). C59 and C68 form a disulfide bridge. Over residues 118 to 133 (RIPRLRPPEPHPRDRS) the composition is skewed to basic and acidic residues. Disordered stretches follow at residues 118–179 (RIPR…SPLS), 293–330 (RARAPRLPEEGGSSRAEDSSEGHEEEVLGGHGEKSPPQ), and 399–420 (GDTADARPPTPLLPGHPTASST). The span at 148 to 158 (SQGNPTGSSPA) shows a compositional bias: polar residues. Over residues 307–326 (RAEDSSEGHEEEVLGGHGEK) the composition is skewed to basic and acidic residues. A phosphoserine mark is found at S311 and S312. A sufficient for dimerization of proICA512 region spans residues 453–579 (SPLGQSQPTV…RQAHGISPMR (127 aa)). Residues N510 and N528 are each glycosylated (N-linked (GlcNAc...) asparagine). Residues 580–604 (SLLLTLVALAGVAGLLVALAVALCM) form a helical membrane-spanning segment. Positions 605-736 (RHHSKQRDKE…PNTCATAQGE (132 aa)) are sufficient for dimerization of proICA512. Over 605–983 (RHHSKQRDKE…VNAILKALPQ (379 aa)) the chain is Cytoplasmic. Residues 648–684 (RAEGQPEPSRVSSVSSQFSDAAQASPSSHSSTPSWCE) are disordered. Positions 652 to 681 (QPEPSRVSSVSSQFSDAAQASPSSHSSTPS) are enriched in low complexity. The Tyrosine-protein phosphatase domain occupies 713 to 973 (LAKEWQALCA…EFALTAVAEE (261 aa)). Residue K758 forms a Glycyl lysine isopeptide (Lys-Gly) (interchain with G-Cter in SUMO) linkage.

Belongs to the protein-tyrosine phosphatase family. Receptor class 8 subfamily. As to quaternary structure, homodimer; shown for the unprocessed protein (proICA512) in the endoplasmic reticulum and resolved during protein maturation as ICA512-TMF seems to be predominantly monomeric in secretory granules; however, ICA512-CCF interacts with ICA512-TMF disrupting the ICA512-TMF:SNTB2 complex. The isolated lumenal RESP18 homology domain has been shown to form disulfide-linked homooligomers. Interacts (via cytoplasmic domain) with phosphorylated SNTB2; this protects PTPRN against cleavage by CAPN1 to produce ICA512-CCF. Dephosphorylation of SNTB2 upon insulin stimulation disrupts the interaction and results in PTPRN cleavage. Interacts with SNX19. ICA512-CCF interacts with PIAS4; in the nucleus. Interacts with STAT5B (phosphorylated); down-regulated by ICA512-CCF sumoylation; ICA512-CCF prevents STAT5B dephosphorylation; ICA512-CCF mediates interaction of STAT5B with PIAS4. Interacts (via RESP18 homology domain) with insulin and proinsulin. Interacts with PTPRN2, PTPRA and PTPRE. Post-translationally, subject to proteolytic cleavage at multiple sites. Subject to cleavage on a pair of basic residues. Following exocytosis of secretory granules in pancreatic beta-cells ICA512-TMF located in the plasma-membrane is cleaved by mu-type calpain CPN1 to yield ICA512-CCF. N-glycosylated. In terms of processing, O-glycosylated. Post-translationally, sumoylated at two sites including Lys-758. Sumoylation decreases interaction with STAT5. Detected in pancreas islets. Detected in pancreas alpha, beta and delta cells, and in chromaffin cells in the adrenal medulla. Detected in amygdala, hypothalamus, autonomous nerve fibers and ganglia, especially at synaptic contacts. Detected in pituitary (at protein level). Detected in brain, specifically in cerebral cortex, diencephalon and brain stem.

Its subcellular location is the membrane. It localises to the cytoplasmic vesicle. The protein resides in the secretory vesicle membrane. The protein localises to the perikaryon. It is found in the cell projection. Its subcellular location is the axon. It localises to the synapse. The protein resides in the cell membrane. The protein localises to the endosome. It is found in the nucleus. In terms of biological role, plays a role in vesicle-mediated secretory processes. Required for normal accumulation of secretory vesicles in hippocampus, pituitary and pancreatic islets. Required for the accumulation of normal levels of insulin-containing vesicles and preventing their degradation. Plays a role in insulin secretion in response to glucose stimuli. Required for normal accumulation of the neurotransmitters norepinephrine, dopamine and serotonin in the brain. In females, but not in males, required for normal accumulation and secretion of pituitary hormones, such as luteinizing hormone (LH) and follicle-stimulating hormone (FSH). Required to maintain normal levels of renin expression and renin release. Seems to lack intrinsic enzyme activity. ICA512-TMF regulates dynamics and exocytosis of insulin secretory granules (SGs); binding of ICA512-TMF to SNTB2/beta-2-syntrophin is proposed to restrain SGs mobility and exocytosis by tethering them to the actin cytoskeleton depending on UTRN; the function is inhibited by cytoplasmic ICA512-CFF dimerizing with ICA512-TMF and displacing SNTB2. Its function is as follows. ICA512-CCF translocated to the nucleus promotes expression of insulin and other granule-related genes; the function implicates binding to and regulating activity of STAT5B probably by preventing its dephosphorylation and potentially by inducing its sumoylation by recruiting PIAS4. Enhances pancreatic beta-cell proliferation by converging with signaling by STAT5B and STAT3. ICA512-CCF located in the cytoplasm regulates dynamics and exocytosis of insulin secretory granules (SGs) by dimerizing with ICA512-TMF and displacing SNTB2 thus enhancing SGs mobility and exocytosis. This is Receptor-type tyrosine-protein phosphatase-like N (Ptprn) from Rattus norvegicus (Rat).